The following is a 457-amino-acid chain: tRNA (guanine(37)-N(1))-methyltransferase (457 aa).

Residues His240, 278–279, 306–307, and Asn338 each bind S-adenosyl-L-methionine; these read DL and DG.

This sequence belongs to the class I-like SAM-binding methyltransferase superfamily. TRM5/TYW2 family. As to quaternary structure, monomer.

The protein resides in the mitochondrion matrix. Its subcellular location is the nucleus. It is found in the cytoplasm. The catalysed reaction is guanosine(37) in tRNA + S-adenosyl-L-methionine = N(1)-methylguanosine(37) in tRNA + S-adenosyl-L-homocysteine + H(+). In terms of biological role, specifically methylates the N1 position of guanosine-37 in various cytoplasmic and mitochondrial tRNAs. Methylation is not dependent on the nature of the nucleoside 5' of the target nucleoside. This is the first step in the biosynthesis of wybutosine (yW), a modified base adjacent to the anticodon of tRNAs and required for accurate decoding. This is tRNA (guanine(37)-N(1))-methyltransferase from Drosophila melanogaster (Fruit fly).